The sequence spans 84 residues: U21-theraphotoxin-Cg1c (84 aa).

A signal peptide spans 1–21 (MKVSVLITLAVLGVMFLLTSA). A propeptide spanning residues 22 to 47 (EERGSDQMDSPAWLKSMERIFQSEER) is cleaved from the precursor. 3 disulfides stabilise this stretch: cysteine 49–cysteine 63, cysteine 56–cysteine 68, and cysteine 62–cysteine 76.

This sequence belongs to the neurotoxin 10 (Hwtx-1) family. 05 (F4a) subfamily. In terms of tissue distribution, expressed by the venom gland.

It is found in the secreted. Probable ion channel inhibitor. This Chilobrachys guangxiensis (Chinese earth tiger tarantula) protein is U21-theraphotoxin-Cg1c.